A 1570-amino-acid chain; its full sequence is Mediator of RNA polymerase II transcription subunit 1 (1570 aa).

Short sequence motifs (LXXLL motif) lie at residues 585 to 589 (LTSLL) and 626 to 630 (LMNLL). Disordered stretches follow at residues 592-687 (TNNT…TEDD), 771-880 (SKLS…FKDF), and 922-1561 (SKTL…MDDD). Basic and acidic residues predominate over residues 675–687 (TGAEKMKNQTEDD). 3 stretches are compositionally biased toward polar residues: residues 788-801 (RDSS…STLF), 832-861 (GSPN…QSGF), and 931-942 (QETQSRSQSPLL). The span at 946 to 958 (LGKDRPQKQKVKE) shows a compositional bias: basic and acidic residues. Residues 961–970 (NGGGAGGGLS) show a composition bias toward gly residues. 5 stretches are compositionally biased toward low complexity: residues 1022-1035 (PTST…GTSG), 1066-1082 (SSHG…SSSS), 1089-1113 (SSLS…MKIG), 1121-1140 (SGQS…SMGK), and 1152-1161 (SSNVSNSSGS). The span at 1173–1190 (MNPSLSKPNISPSHSRPS) shows a compositional bias: polar residues. The span at 1217–1228 (GSGGQHLSGGGS) shows a compositional bias: gly residues. Over residues 1229-1271 (NSTTKSSSGLVSSGSLSQKPNSSSSSSSSSSSSSSSSSSSSSS) the composition is skewed to low complexity. The span at 1276–1287 (VSQNLHGNSKGK) shows a compositional bias: polar residues. Over residues 1308–1328 (VGTGGPGSEDPMDGGGGGGST) the composition is skewed to gly residues. Over residues 1347–1359 (PTKREKSEKDKSK) the composition is skewed to basic and acidic residues. 2 stretches are compositionally biased toward polar residues: residues 1418–1433 (SQMQ…SGST) and 1441–1455 (PSHN…QALD). Residues 1459 to 1469 (ESGSSSIAEKS) show a composition bias toward low complexity. The segment covering 1494–1503 (KHKKHKKEKK) has biased composition (basic residues). Over residues 1504 to 1516 (RLKDKDRDREKKK) the composition is skewed to basic and acidic residues. The segment covering 1536-1546 (MAMSGGSMMSS) has biased composition (low complexity).

This sequence belongs to the Mediator complex subunit 1 family. Component of the Mediator complex.

Its subcellular location is the nucleus. Functionally, component of the Mediator complex, a coactivator involved in the regulated transcription of nearly all RNA polymerase II-dependent genes. Mediator functions as a bridge to convey information from gene-specific regulatory proteins to the basal RNA polymerase II transcription machinery. Mediator is recruited to promoters by direct interactions with regulatory proteins and serves as a scaffold for the assembly of a functional preinitiation complex with RNA polymerase II and the general transcription factors. The sequence is that of Mediator of RNA polymerase II transcription subunit 1 (med1) from Xenopus laevis (African clawed frog).